Reading from the N-terminus, the 334-residue chain is Holliday junction branch migration complex subunit RuvB (334 aa).

Residues 4 to 186 (ADRLIAPENP…FGITQRLEYY (183 aa)) are large ATPase domain (RuvB-L). Residues isoleucine 25, arginine 26, glycine 67, lysine 70, threonine 71, threonine 72, 133–135 (EDY), arginine 176, tyrosine 186, and arginine 223 contribute to the ATP site. Threonine 71 contacts Mg(2+). Positions 187–257 (KVQDLQNIVQ…VADKALNMLD (71 aa)) are small ATPAse domain (RuvB-S). The tract at residues 260–334 (AQGFDYMDRK…RAYLHFGIEK (75 aa)) is head domain (RuvB-H). DNA is bound by residues arginine 315 and arginine 320.

This sequence belongs to the RuvB family. Homohexamer. Forms an RuvA(8)-RuvB(12)-Holliday junction (HJ) complex. HJ DNA is sandwiched between 2 RuvA tetramers; dsDNA enters through RuvA and exits via RuvB. An RuvB hexamer assembles on each DNA strand where it exits the tetramer. Each RuvB hexamer is contacted by two RuvA subunits (via domain III) on 2 adjacent RuvB subunits; this complex drives branch migration. In the full resolvosome a probable DNA-RuvA(4)-RuvB(12)-RuvC(2) complex forms which resolves the HJ.

Its subcellular location is the cytoplasm. The enzyme catalyses ATP + H2O = ADP + phosphate + H(+). Functionally, the RuvA-RuvB-RuvC complex processes Holliday junction (HJ) DNA during genetic recombination and DNA repair, while the RuvA-RuvB complex plays an important role in the rescue of blocked DNA replication forks via replication fork reversal (RFR). RuvA specifically binds to HJ cruciform DNA, conferring on it an open structure. The RuvB hexamer acts as an ATP-dependent pump, pulling dsDNA into and through the RuvAB complex. RuvB forms 2 homohexamers on either side of HJ DNA bound by 1 or 2 RuvA tetramers; 4 subunits per hexamer contact DNA at a time. Coordinated motions by a converter formed by DNA-disengaged RuvB subunits stimulates ATP hydrolysis and nucleotide exchange. Immobilization of the converter enables RuvB to convert the ATP-contained energy into a lever motion, pulling 2 nucleotides of DNA out of the RuvA tetramer per ATP hydrolyzed, thus driving DNA branch migration. The RuvB motors rotate together with the DNA substrate, which together with the progressing nucleotide cycle form the mechanistic basis for DNA recombination by continuous HJ branch migration. Branch migration allows RuvC to scan DNA until it finds its consensus sequence, where it cleaves and resolves cruciform DNA. This is Holliday junction branch migration complex subunit RuvB from Vibrio parahaemolyticus serotype O3:K6 (strain RIMD 2210633).